We begin with the raw amino-acid sequence, 355 residues long: 4-hydroxy-3-methylbut-2-en-1-yl diphosphate synthase (flavodoxin) (355 aa).

[4Fe-4S] cluster-binding residues include Cys266, Cys269, Cys301, and Glu308.

Belongs to the IspG family. The cofactor is [4Fe-4S] cluster.

It catalyses the reaction (2E)-4-hydroxy-3-methylbut-2-enyl diphosphate + oxidized [flavodoxin] + H2O + 2 H(+) = 2-C-methyl-D-erythritol 2,4-cyclic diphosphate + reduced [flavodoxin]. The protein operates within isoprenoid biosynthesis; isopentenyl diphosphate biosynthesis via DXP pathway; isopentenyl diphosphate from 1-deoxy-D-xylulose 5-phosphate: step 5/6. Its function is as follows. Converts 2C-methyl-D-erythritol 2,4-cyclodiphosphate (ME-2,4cPP) into 1-hydroxy-2-methyl-2-(E)-butenyl 4-diphosphate. The sequence is that of 4-hydroxy-3-methylbut-2-en-1-yl diphosphate synthase (flavodoxin) from Caldanaerobacter subterraneus subsp. tengcongensis (strain DSM 15242 / JCM 11007 / NBRC 100824 / MB4) (Thermoanaerobacter tengcongensis).